Reading from the N-terminus, the 304-residue chain is UTP--glucose-1-phosphate uridylyltransferase 1 (304 aa).

The protein belongs to the UDPGP type 2 family.

The enzyme catalyses alpha-D-glucose 1-phosphate + UTP + H(+) = UDP-alpha-D-glucose + diphosphate. It participates in carbohydrate metabolism; nucleotide-sugar metabolism. The polypeptide is UTP--glucose-1-phosphate uridylyltransferase 1 (hasC1) (Streptococcus pyogenes serotype M1).